We begin with the raw amino-acid sequence, 167 residues long: Ribosome maturation factor RimM (167 aa).

Positions 94–165 (ENEFYYSDII…KIIITPMEGL (72 aa)) constitute a PRC barrel domain.

It belongs to the RimM family. As to quaternary structure, binds ribosomal protein uS19.

Its subcellular location is the cytoplasm. An accessory protein needed during the final step in the assembly of 30S ribosomal subunit, possibly for assembly of the head region. Essential for efficient processing of 16S rRNA. May be needed both before and after RbfA during the maturation of 16S rRNA. It has affinity for free ribosomal 30S subunits but not for 70S ribosomes. In Staphylococcus aureus (strain Mu3 / ATCC 700698), this protein is Ribosome maturation factor RimM.